Consider the following 170-residue polypeptide: Alpha-crystallin A chain (170 aa).

Methionine 1 bears the N-acetylmethionine mark. The segment at 1–63 is required for complex formation with BFSP1 and BFSP2; the sequence is MDVTIQQPWF…RTALDSGISE (63 aa). Glutamine 6 carries the post-translational modification Deamidated glutamine; partial. Serine 45 is subject to Phosphoserine. Glutamine 50 is subject to Deamidated glutamine; partial. One can recognise a sHSP domain in the interval 52 to 161; sequence LFRTALDSGI…SERPIPVSRE (110 aa). N6-acetyllysine is present on residues lysine 70 and lysine 99. Residue histidine 100 participates in Zn(2+) binding. Asparagine 101 is modified (deamidated asparagine; partial). Zn(2+) is bound by residues glutamate 102, histidine 107, and histidine 151. Positions 144-170 are disordered; it reads PKIVDPSHSERPIPVSREEKPSSAPSS. Residues 148 to 164 show a composition bias toward basic and acidic residues; that stretch reads DPSHSERPIPVSREEKP. An O-linked (GlcNAc) serine glycan is attached at serine 159.

It belongs to the small heat shock protein (HSP20) family. As to quaternary structure, heteromer composed of three CRYAA and one CRYAB subunits. Inter-subunit bridging via zinc ions enhances stability, which is crucial as there is no protein turn over in the lens. Can also form homodimers and homotetramers (dimers of dimers) which serve as the building blocks of homooligomers. Within homooligomers, the zinc-binding motif is created from residues of 3 different molecules. His-100 and Glu-102 from one molecule are ligands of the zinc ion, and His-107 and His-151 residues from additional molecules complete the site with tetrahedral coordination geometry. Part of a complex required for lens intermediate filament formation composed of BFSP1, BFSP2 and CRYAA. In terms of processing, acetylation at Lys-70 may increase chaperone activity. Post-translationally, undergoes age-dependent proteolytical cleavage at the C-terminus.

It localises to the cytoplasm. The protein localises to the nucleus. Contributes to the transparency and refractive index of the lens. Acts as a chaperone, preventing aggregation of various proteins under a wide range of stress conditions. Required for the correct formation of lens intermediate filaments as part of a complex composed of BFSP1, BFSP2 and CRYAA. The polypeptide is Alpha-crystallin A chain (CRYAA) (Bradypus variegatus (Brown-throated three-fingered sloth)).